We begin with the raw amino-acid sequence, 173 residues long: Alkyl hydroperoxide reductase AhpD (173 aa).

The Proton donor role is filled by Cys131. Cys131 and Cys134 form a disulfide bridge. The active-site Cysteine sulfenic acid (-SOH) intermediate is the Cys134.

It belongs to the AhpD family.

It catalyses the reaction N(6)-[(R)-dihydrolipoyl]-L-lysyl-[lipoyl-carrier protein] + a hydroperoxide = N(6)-[(R)-lipoyl]-L-lysyl-[lipoyl-carrier protein] + an alcohol + H2O. Functionally, antioxidant protein with alkyl hydroperoxidase activity. Required for the reduction of the AhpC active site cysteine residues and for the regeneration of the AhpC enzyme activity. The sequence is that of Alkyl hydroperoxide reductase AhpD from Rhizorhabdus wittichii (strain DSM 6014 / CCUG 31198 / JCM 15750 / NBRC 105917 / EY 4224 / RW1) (Sphingomonas wittichii).